The primary structure comprises 109 residues: Ribonuclease P protein component 2 (109 aa).

Belongs to the eukaryotic/archaeal RNase P protein component 2 family. As to quaternary structure, consists of a catalytic RNA component and at least 4-5 protein subunits.

The protein localises to the cytoplasm. The enzyme catalyses Endonucleolytic cleavage of RNA, removing 5'-extranucleotides from tRNA precursor.. Its function is as follows. Part of ribonuclease P, a protein complex that generates mature tRNA molecules by cleaving their 5'-ends. In Archaeoglobus fulgidus (strain ATCC 49558 / DSM 4304 / JCM 9628 / NBRC 100126 / VC-16), this protein is Ribonuclease P protein component 2.